A 523-amino-acid chain; its full sequence is Lysine--tRNA ligase (523 aa).

Positions 30–38 (PSGYVHVGN) match the 'HIGH' region motif. 8 residues coordinate Zn(2+): Asp95, Cys99, His100, His106, Cys177, His180, Cys199, and His203. The short motif at 279–283 (KMSGS) is the 'KMSKS' region element.

This sequence belongs to the class-I aminoacyl-tRNA synthetase family. Zn(2+) serves as cofactor.

Its subcellular location is the cytoplasm. The enzyme catalyses tRNA(Lys) + L-lysine + ATP = L-lysyl-tRNA(Lys) + AMP + diphosphate. The polypeptide is Lysine--tRNA ligase (lysS) (Pyrococcus horikoshii (strain ATCC 700860 / DSM 12428 / JCM 9974 / NBRC 100139 / OT-3)).